The primary structure comprises 701 residues: Elongation factor G (701 aa).

The region spanning 8 to 291 (GRYRNIGIVA…AVIDYLPAPT (284 aa)) is the tr-type G domain. GTP is bound by residues 17 to 24 (AHVDAGKT), 89 to 93 (DTPGH), and 143 to 146 (NKMD).

Belongs to the TRAFAC class translation factor GTPase superfamily. Classic translation factor GTPase family. EF-G/EF-2 subfamily.

The protein resides in the cytoplasm. Its function is as follows. Catalyzes the GTP-dependent ribosomal translocation step during translation elongation. During this step, the ribosome changes from the pre-translocational (PRE) to the post-translocational (POST) state as the newly formed A-site-bound peptidyl-tRNA and P-site-bound deacylated tRNA move to the P and E sites, respectively. Catalyzes the coordinated movement of the two tRNA molecules, the mRNA and conformational changes in the ribosome. This is Elongation factor G from Pseudomonas savastanoi pv. phaseolicola (strain 1448A / Race 6) (Pseudomonas syringae pv. phaseolicola (strain 1448A / Race 6)).